Reading from the N-terminus, the 66-residue chain is Beta-toxin Cb3 (66 aa).

Residues 1 to 66 (KEGYIVNYYD…VWPLPNKTCL (66 aa)) form the LCN-type CS-alpha/beta domain. Disulfide bonds link Cys-12/Cys-65, Cys-16/Cys-41, Cys-25/Cys-46, and Cys-29/Cys-48.

It belongs to the long (4 C-C) scorpion toxin superfamily. Sodium channel inhibitor family. Beta subfamily. Expressed by the venom gland.

Its subcellular location is the secreted. In terms of biological role, beta toxins bind voltage-independently at site-4 of sodium channels (Nav) and reduces peak current and shifts the voltage of activation toward more negative potentials thereby affecting sodium channel activation and promoting spontaneous and repetitive firing. Has an inhibitory effect on voltage-gated sodium channels hNav1.1/SCN1A, hNav1.2/SCN2A, hNav1.4/SCN4A and hNav1.6/SCN8A. Reduces the peak current of hNav1.5/SCN5A but does not shift its voltage of activation. Also affects the inactivation processes of hNav1.1/SCN1A, hNav1.4/SCN4A, hNav1.5/SCN5A and hNav1.6/SCN8A. This toxin is active against mammals and lethal to mice. This chain is Beta-toxin Cb3, found in Centruroides baergi (Scorpion).